The following is a 191-amino-acid chain: Small ribosomal subunit protein uS7 (191 aa).

Residues 56 to 80 (NKSGEQGDGDGESGGKAGGIKKRSL) form a disordered region.

This sequence belongs to the universal ribosomal protein uS7 family. Part of the 30S ribosomal subunit. Contacts proteins S9 and S11.

In terms of biological role, one of the primary rRNA binding proteins, it binds directly to 16S rRNA where it nucleates assembly of the head domain of the 30S subunit. Is located at the subunit interface close to the decoding center, probably blocks exit of the E-site tRNA. The chain is Small ribosomal subunit protein uS7 from Coxiella burnetii (strain CbuK_Q154) (Coxiella burnetii (strain Q154)).